A 360-amino-acid polypeptide reads, in one-letter code: Glutamate 5-kinase (360 aa).

Lysine 7 contributes to the ATP binding site. Residues serine 47, aspartate 134, and asparagine 146 each coordinate substrate. ATP is bound by residues 166–167 (TD) and 210–216 (TGGISTK). In terms of domain architecture, PUA spans 275-356 (VGKITLDDGA…SSIIVVHRDV (82 aa)).

The protein belongs to the glutamate 5-kinase family.

The protein resides in the cytoplasm. It carries out the reaction L-glutamate + ATP = L-glutamyl 5-phosphate + ADP. The protein operates within amino-acid biosynthesis; L-proline biosynthesis; L-glutamate 5-semialdehyde from L-glutamate: step 1/2. Catalyzes the transfer of a phosphate group to glutamate to form L-glutamate 5-phosphate. The protein is Glutamate 5-kinase of Prochlorococcus marinus (strain MIT 9301).